The primary structure comprises 174 residues: Small hydrophobic protein (174 aa).

Residues 33–53 (VAVICAILALIFLVATIGLSV) form a helical membrane-spanning segment. Residue N165 is glycosylated (N-linked (GlcNAc...) asparagine; by host).

Its subcellular location is the membrane. This is Small hydrophobic protein (SH) from Meleagris gallopavo (Wild turkey).